The sequence spans 238 residues: tRNA (guanine-N(7)-)-methyltransferase (238 aa).

S-adenosyl-L-methionine is bound by residues glutamate 68, glutamate 93, aspartate 120, and aspartate 143. The active site involves aspartate 143. Substrate-binding positions include lysine 147, aspartate 179, and 216 to 219 (TKFE).

Belongs to the class I-like SAM-binding methyltransferase superfamily. TrmB family.

The catalysed reaction is guanosine(46) in tRNA + S-adenosyl-L-methionine = N(7)-methylguanosine(46) in tRNA + S-adenosyl-L-homocysteine. The protein operates within tRNA modification; N(7)-methylguanine-tRNA biosynthesis. In terms of biological role, catalyzes the formation of N(7)-methylguanine at position 46 (m7G46) in tRNA. This is tRNA (guanine-N(7)-)-methyltransferase from Shewanella amazonensis (strain ATCC BAA-1098 / SB2B).